We begin with the raw amino-acid sequence, 843 residues long: Beta-mannosidase B (843 aa).

Glu430 (proton donor) is an active-site residue. Asn721 carries an N-linked (GlcNAc...) asparagine glycan.

This sequence belongs to the glycosyl hydrolase 2 family. Beta-mannosidase B subfamily.

It catalyses the reaction Hydrolysis of terminal, non-reducing beta-D-mannose residues in beta-D-mannosides.. It functions in the pathway glycan metabolism; N-glycan degradation. Exoglycosidase that cleaves the single beta-linked mannose residue from the non-reducing end of beta-mannosidic oligosaccharides of various complexity and length. Prefers mannobiose over mannotriose and has no activity against polymeric mannan. Is also severely restricted by galactosyl substitutions at the +1 subsite. The chain is Beta-mannosidase B (mndB) from Aspergillus terreus (strain NIH 2624 / FGSC A1156).